Here is a 134-residue protein sequence, read N- to C-terminus: Peptide methionine sulfoxide reductase MsrB (134 aa).

The region spanning 9-131 (DEYWRDKLDA…NSASIQLQKE (123 aa)) is the MsrB domain. Residues Cys-48, Cys-51, Cys-97, and Cys-100 each coordinate Zn(2+). Cys-120 functions as the Nucleophile in the catalytic mechanism.

Belongs to the MsrB Met sulfoxide reductase family. The cofactor is Zn(2+).

The enzyme catalyses L-methionyl-[protein] + [thioredoxin]-disulfide + H2O = L-methionyl-(R)-S-oxide-[protein] + [thioredoxin]-dithiol. The chain is Peptide methionine sulfoxide reductase MsrB from Saccharophagus degradans (strain 2-40 / ATCC 43961 / DSM 17024).